The chain runs to 573 residues: Maestro heat-like repeat-containing protein family member 9 (573 aa).

5 HEAT repeats span residues 118–155 (LYKL…FTVT), 252–289 (PLLT…FHAE), 292–328 (TMVS…TSPK), 357–394 (SVAP…ITNL), and 418–458 (QYFP…LLNC).

This Homo sapiens (Human) protein is Maestro heat-like repeat-containing protein family member 9 (MROH9).